The following is a 310-amino-acid chain: Olfactory receptor 5P56 (310 aa).

Residues 1–25 are Extracellular-facing; the sequence is MEAQNHTTVKEFILLGLTENSTLRV. N-linked (GlcNAc...) asparagine glycosylation is found at Asn-5 and Asn-20. Residues 26–46 traverse the membrane as a helical segment; it reads ILFMIFLGIYTVTLVGNFSII. Topologically, residues 47–54 are cytoplasmic; it reads SLIRSCPQ. Residues 55–75 traverse the membrane as a helical segment; that stretch reads LHTPMYLFLSHLALVDIGFST. The Extracellular portion of the chain corresponds to 76–99; sequence SITPIMLTGFLGHTVTLSVAACVA. A disulfide bridge connects residues Cys-97 and Cys-189. Residues 100 to 120 traverse the membrane as a helical segment; sequence QFCIAVTFGTVECFLLAVMAY. Over 121-133 the chain is Cytoplasmic; it reads DRYVAICSPLLYS. A helical transmembrane segment spans residues 134–154; the sequence is THMSPRICFLLVGASYVGGCV. Topologically, residues 155 to 196 are extracellular; sequence NSGTFTSCLLILSFCGPNQIDHFFCDFPAVLKLSCSDVSIIG. A helical membrane pass occupies residues 197–217; it reads IIPSISAGSIIVITVFVIAVS. Residues 218-237 lie on the Cytoplasmic side of the membrane; the sequence is YTYILITILNMRSTEGRHKA. A helical membrane pass occupies residues 238–258; sequence FSTCTSHLTAVTLYYGTITFI. Residues 259–271 lie on the Extracellular side of the membrane; that stretch reads YVMPKSNYSTAQN. A glycan (N-linked (GlcNAc...) asparagine) is linked at Asn-265. Residues 272-292 form a helical membrane-spanning segment; the sequence is KILSVFYTVVIPMLNPLIYSL. Residues 293 to 310 are Cytoplasmic-facing; it reads RNRDVKEALRKAIIRIFP.

This sequence belongs to the G-protein coupled receptor 1 family.

Its subcellular location is the cell membrane. Potential odorant receptor. The polypeptide is Olfactory receptor 5P56 (Mus musculus (Mouse)).